Consider the following 853-residue polypeptide: G-type lectin S-receptor-like serine/threonine-protein kinase SRK (853 aa).

A signal peptide spans 1–31 (MRGELPNKHHSYTFFVFLFFFLILFPDLSIS). Topologically, residues 32–441 (VNTLSATESL…FGERRTIRGK (410 aa)) are extracellular. Residues 34 to 154 (TLSATESLTI…KINESDEFLW (121 aa)) enclose the Bulb-type lectin domain. 4 N-linked (GlcNAc...) asparagine glycosylation sites follow: Asn46, Asn120, Asn147, and Asn243. One can recognise an EGF-like; atypical domain in the interval 293–329 (PKDTCDLYGICGPYAYCDMSTSPTCNCIKGFQPLSPQ). Intrachain disulfides connect Cys297-Cys309, Cys303-Cys317, Cys378-Cys403, and Cys382-Cys388. Residues 348–428 (CGEDRFFRLM…DGQDLFVRLA (81 aa)) form the PAN domain. The N-linked (GlcNAc...) asparagine glycan is linked to Asn387. A helical transmembrane segment spans residues 442–462 (IIGLIIGISLMLVLSFIIYCF). Residues 463-853 (WKKKQKRARA…QITVSVINAR (391 aa)) are Cytoplasmic-facing. A Protein kinase domain is found at 524–802 (FSDSNILGRG…PKMSSVVLML (279 aa)). Residues 530-538 (LGRGGFGIV) and Lys552 each bind ATP. Ser558 carries the phosphoserine modification. The tract at residues 613–631 (TQSSNKLNWQTRFSIINGI) is caM-binding. Asp650 serves as the catalytic Proton acceptor. A phosphoserine mark is found at Ser654 and Ser667. Phosphothreonine is present on Thr684. Positions 807 to 838 (GEIPQPKRPGYCVGRSSLDTADSSSSTKRDSE) are disordered. The span at 822–832 (SSLDTADSSSS) shows a compositional bias: low complexity. Ser831 bears the Phosphoserine mark.

This sequence belongs to the protein kinase superfamily. Ser/Thr protein kinase family.

The protein localises to the cell membrane. The enzyme catalyses L-seryl-[protein] + ATP = O-phospho-L-seryl-[protein] + ADP + H(+). It carries out the reaction L-threonyl-[protein] + ATP = O-phospho-L-threonyl-[protein] + ADP + H(+). Functionally, female specificity determinant of self-incompatibility. This Arabidopsis thaliana (Mouse-ear cress) protein is G-type lectin S-receptor-like serine/threonine-protein kinase SRK (SRK).